A 156-amino-acid chain; its full sequence is ATP synthase subunit b (156 aa).

A helical transmembrane segment spans residues 11–31; that stretch reads AIAFVLFVLFCMKYVWPPLMA.

The protein belongs to the ATPase B chain family. In terms of assembly, F-type ATPases have 2 components, F(1) - the catalytic core - and F(0) - the membrane proton channel. F(1) has five subunits: alpha(3), beta(3), gamma(1), delta(1), epsilon(1). F(0) has three main subunits: a(1), b(2) and c(10-14). The alpha and beta chains form an alternating ring which encloses part of the gamma chain. F(1) is attached to F(0) by a central stalk formed by the gamma and epsilon chains, while a peripheral stalk is formed by the delta and b chains.

It is found in the cell inner membrane. In terms of biological role, f(1)F(0) ATP synthase produces ATP from ADP in the presence of a proton or sodium gradient. F-type ATPases consist of two structural domains, F(1) containing the extramembraneous catalytic core and F(0) containing the membrane proton channel, linked together by a central stalk and a peripheral stalk. During catalysis, ATP synthesis in the catalytic domain of F(1) is coupled via a rotary mechanism of the central stalk subunits to proton translocation. Its function is as follows. Component of the F(0) channel, it forms part of the peripheral stalk, linking F(1) to F(0). This Sodalis glossinidius (strain morsitans) protein is ATP synthase subunit b.